The sequence spans 54 residues: MLYWALVFLVVAIIAGALGFGGIAGTSAGIAQILFFIFLAFLVISLLAGLFRRA.

The next 2 membrane-spanning stretches (helical) occupy residues tryptophan 4–alanine 24 and isoleucine 30–leucine 50.

It belongs to the UPF0391 family.

The protein localises to the cell membrane. The sequence is that of UPF0391 membrane protein msr3702 from Mesorhizobium japonicum (strain LMG 29417 / CECT 9101 / MAFF 303099) (Mesorhizobium loti (strain MAFF 303099)).